The sequence spans 25 residues: Aurein-5.1 (25 aa).

This sequence belongs to the frog skin active peptide (FSAP) family. Aurein subfamily. In terms of tissue distribution, expressed by the skin dorsal glands.

The protein localises to the secreted. Functionally, has no antimicrobial or anticancer activity. This Ranoidea aurea (Green and golden bell frog) protein is Aurein-5.1.